Here is a 553-residue protein sequence, read N- to C-terminus: Dihydroxy-acid dehydratase (553 aa).

Aspartate 78 serves as a coordination point for Mg(2+). Cysteine 119 is a [2Fe-2S] cluster binding site. The Mg(2+) site is built by aspartate 120 and lysine 121. Lysine 121 is modified (N6-carboxylysine). A [2Fe-2S] cluster-binding site is contributed by cysteine 193. Position 441 (glutamate 441) interacts with Mg(2+). Serine 467 serves as the catalytic Proton acceptor.

It belongs to the IlvD/Edd family. Homodimer. [2Fe-2S] cluster is required as a cofactor. Requires Mg(2+) as cofactor.

It catalyses the reaction (2R)-2,3-dihydroxy-3-methylbutanoate = 3-methyl-2-oxobutanoate + H2O. The enzyme catalyses (2R,3R)-2,3-dihydroxy-3-methylpentanoate = (S)-3-methyl-2-oxopentanoate + H2O. It participates in amino-acid biosynthesis; L-isoleucine biosynthesis; L-isoleucine from 2-oxobutanoate: step 3/4. It functions in the pathway amino-acid biosynthesis; L-valine biosynthesis; L-valine from pyruvate: step 3/4. Its function is as follows. Functions in the biosynthesis of branched-chain amino acids. Catalyzes the dehydration of (2R,3R)-2,3-dihydroxy-3-methylpentanoate (2,3-dihydroxy-3-methylvalerate) into 2-oxo-3-methylpentanoate (2-oxo-3-methylvalerate) and of (2R)-2,3-dihydroxy-3-methylbutanoate (2,3-dihydroxyisovalerate) into 2-oxo-3-methylbutanoate (2-oxoisovalerate), the penultimate precursor to L-isoleucine and L-valine, respectively. The protein is Dihydroxy-acid dehydratase of Citrifermentans bemidjiense (strain ATCC BAA-1014 / DSM 16622 / JCM 12645 / Bem) (Geobacter bemidjiensis).